A 99-amino-acid polypeptide reads, in one-letter code: Regulatory protein FanB (99 aa).

In terms of biological role, trans-acting protein involved in the regulation of the biogenesis of K99 fimbriae (FanC). The sequence is that of Regulatory protein FanB (fanB) from Escherichia coli.